The following is a 215-amino-acid chain: Ribonuclease T (215 aa).

Positions 20–194 constitute an Exonuclease domain; sequence VVIDVETAGF…YDTERTAVLF (175 aa). Mg(2+)-binding residues include Asp-23, Glu-25, His-181, and Asp-186. Residue His-181 is the Proton donor/acceptor of the active site.

The protein belongs to the RNase T family. Homodimer. Mg(2+) is required as a cofactor.

Its function is as follows. Trims short 3' overhangs of a variety of RNA species, leaving a one or two nucleotide 3' overhang. Responsible for the end-turnover of tRNA: specifically removes the terminal AMP residue from uncharged tRNA (tRNA-C-C-A). Also appears to be involved in tRNA biosynthesis. The chain is Ribonuclease T from Citrobacter koseri (strain ATCC BAA-895 / CDC 4225-83 / SGSC4696).